Reading from the N-terminus, the 321-residue chain is Probable NAD(P)H-dependent D-xylose reductase xyl1 (321 aa).

The active-site Proton donor is the Tyr50. His112 serves as a coordination point for substrate. Residues 166-167 (SN), 215-224 (SSFGPLSFVE), and 271-281 (KSNDPTRLAQN) contribute to the NAD(+) site.

Belongs to the aldo/keto reductase family.

The catalysed reaction is xylitol + NAD(+) = D-xylose + NADH + H(+). It carries out the reaction xylitol + NADP(+) = D-xylose + NADPH + H(+). Its pathway is carbohydrate metabolism; D-xylose degradation. Its function is as follows. Catalyzes the initial reaction in the xylose utilization pathway by reducing D-xylose into xylitol. Xylose is a major component of hemicelluloses such as xylan. Most fungi utilize D-xylose via three enzymatic reactions, xylose reductase (XR), xylitol dehydrogenase (XDH), and xylulokinase, to form xylulose 5-phosphate, which enters pentose phosphate pathway. The sequence is that of Probable NAD(P)H-dependent D-xylose reductase xyl1 (xyl1) from Neosartorya fischeri (strain ATCC 1020 / DSM 3700 / CBS 544.65 / FGSC A1164 / JCM 1740 / NRRL 181 / WB 181) (Aspergillus fischerianus).